A 51-amino-acid polypeptide reads, in one-letter code: Cyclic phosphodiesterase (51 aa).

His-11 acts as the Proton donor/acceptor in catalysis. Substrate is bound at residue Thr-13. His-38 acts as the Proton donor/acceptor in catalysis. Residues Ser-40 and Tyr-43 each contribute to the substrate site.

Belongs to the 2H phosphoesterase superfamily. CPD1 family.

Functionally, hydrolyzes ADP-ribose 1'',2''-cyclic phosphate (Appr&gt;1) that is produced during tRNA splicing into ADP-ribose 1''-phosphate (Appr-1''p). In Triticum aestivum (Wheat), this protein is Cyclic phosphodiesterase.